Consider the following 479-residue polypeptide: FAD-dependent monooxygenase ausM (479 aa).

Glu40, Gly54, and Arg113 together coordinate FAD. Tyr224 is a catalytic residue. The N-linked (GlcNAc...) asparagine glycan is linked to Asn289. The FAD site is built by Asp316 and Ala329. Residues 449 to 469 (TLPWLVISLPVLASMLCYLVY) traverse the membrane as a helical segment.

The protein belongs to the paxM FAD-dependent monooxygenase family. FAD is required as a cofactor.

The protein localises to the membrane. Its pathway is secondary metabolite biosynthesis; terpenoid biosynthesis. Its function is as follows. FAD-dependent monooxygenase; part of the gene cluster B that mediates the biosynthesis of austinol and dehydroaustinol, two fungal meroterpenoids. The first step of the pathway is the synthesis of 3,5-dimethylorsellinic acid by the polyketide synthase ausA. 3,5-dimethylorsellinic acid is then prenylated by the polyprenyl transferase ausN. Further epoxidation by the FAD-dependent monooxygenase ausM and cyclization by the probable terpene cyclase ausL lead to the formation of protoaustinoid A. Protoaustinoid A is then oxidized to spiro-lactone preaustinoid A3 by the combined action of the FAD-binding monooxygenases ausB and ausC, and the dioxygenase ausE. Acid-catalyzed keto-rearrangement and ring contraction of the tetraketide portion of preaustinoid A3 by ausJ lead to the formation of preaustinoid A4. The aldo-keto reductase ausK, with the help of ausH, is involved in the next step by transforming preaustinoid A4 into isoaustinone which is in turn hydroxylated by the P450 monooxygenase ausI to form austinolide. Finally, the cytochrome P450 monooxygenase ausG modifies austinolide to austinol. Austinol can be further modified to dehydroaustinol which forms a diffusible complex with diorcinol that initiates conidiation. Due to genetic rearrangements of the clusters and the subsequent loss of some enzymes, the end products of the Emericella nidulans austinoid biosynthesis clusters are austinol and dehydroaustinol, even if additional enzymes, such as the O-acetyltransferase ausQ and the cytochrome P450 monooxygenase ausR are still functional. This is FAD-dependent monooxygenase ausM from Emericella nidulans (strain FGSC A4 / ATCC 38163 / CBS 112.46 / NRRL 194 / M139) (Aspergillus nidulans).